A 1486-amino-acid chain; its full sequence is Chromosome partition protein MukB (1486 aa).

ATP is bound at residue 34–41 (GGNGAGKS). 3 coiled-coil regions span residues 326–418 (LEAD…QYNQ), 444–480 (LETF…QAYQ), and 509–603 (RHLA…RAPV). The segment at 666–783 (PGGSEDQRLN…EVPLFGRAAR (118 aa)) is flexible hinge. 3 coiled-coil regions span residues 835–923 (EAEI…AKLE), 977–1115 (EMLS…TAKA), and 1209–1266 (VEAI…QNVS).

Belongs to the SMC family. MukB subfamily. Homodimerization via its hinge domain. Binds to DNA via its C-terminal region. Interacts, and probably forms a ternary complex, with MukE and MukF via its C-terminal region. The complex formation is stimulated by calcium or magnesium. Interacts with tubulin-related protein FtsZ.

It is found in the cytoplasm. It localises to the nucleoid. Functionally, plays a central role in chromosome condensation, segregation and cell cycle progression. Functions as a homodimer, which is essential for chromosome partition. Involved in negative DNA supercoiling in vivo, and by this means organize and compact chromosomes. May achieve or facilitate chromosome segregation by condensation DNA from both sides of a centrally located replisome during cell division. The sequence is that of Chromosome partition protein MukB from Escherichia coli O81 (strain ED1a).